The primary structure comprises 158 residues: Endoribonuclease YbeY (158 aa).

The Zn(2+) site is built by His119, His123, and His129.

It belongs to the endoribonuclease YbeY family. It depends on Zn(2+) as a cofactor.

The protein resides in the cytoplasm. Functionally, single strand-specific metallo-endoribonuclease involved in late-stage 70S ribosome quality control and in maturation of the 3' terminus of the 16S rRNA. This chain is Endoribonuclease YbeY, found in Acinetobacter baumannii (strain SDF).